A 365-amino-acid chain; its full sequence is Peridinin-chlorophyll a-binding protein, chloroplastic (365 aa).

The transit peptide at 1–52 (MVRGARKAIAVGVAVAVACGLQKHLNFVPGPRHAAPVAAAAASMMMAPAAFA) directs the protein to the chloroplast. 2 tandem repeats follow at residues 53–215 (DEIG…VPSG) and 216–365 (DKIG…ASQR).

In terms of assembly, monomer.

It is found in the plastid. It localises to the chloroplast. Functionally, water-soluble antenna for capture of solar energy in the blue-green range. Peridinin is an asymmetric carotenoid. This chain is Peridinin-chlorophyll a-binding protein, chloroplastic, found in Symbiodinium sp. (Dinoflagellate).